Here is a 262-residue protein sequence, read N- to C-terminus: Acyl-[acyl-carrier-protein]--UDP-N-acetylglucosamine O-acyltransferase (262 aa).

It belongs to the transferase hexapeptide repeat family. LpxA subfamily. As to quaternary structure, homotrimer.

It is found in the cytoplasm. The enzyme catalyses a (3R)-hydroxyacyl-[ACP] + UDP-N-acetyl-alpha-D-glucosamine = a UDP-3-O-[(3R)-3-hydroxyacyl]-N-acetyl-alpha-D-glucosamine + holo-[ACP]. It participates in glycolipid biosynthesis; lipid IV(A) biosynthesis; lipid IV(A) from (3R)-3-hydroxytetradecanoyl-[acyl-carrier-protein] and UDP-N-acetyl-alpha-D-glucosamine: step 1/6. Functionally, involved in the biosynthesis of lipid A, a phosphorylated glycolipid that anchors the lipopolysaccharide to the outer membrane of the cell. This Salmonella schwarzengrund (strain CVM19633) protein is Acyl-[acyl-carrier-protein]--UDP-N-acetylglucosamine O-acyltransferase.